We begin with the raw amino-acid sequence, 376 residues long: Succinyl-diaminopimelate desuccinylase (376 aa).

H67 is a binding site for Zn(2+). The active site involves D69. D100 serves as a coordination point for Zn(2+). E134 functions as the Proton acceptor in the catalytic mechanism. The Zn(2+) site is built by E135, E163, and H349.

Belongs to the peptidase M20A family. DapE subfamily. Homodimer. Zn(2+) serves as cofactor. Co(2+) is required as a cofactor.

The enzyme catalyses N-succinyl-(2S,6S)-2,6-diaminopimelate + H2O = (2S,6S)-2,6-diaminopimelate + succinate. It functions in the pathway amino-acid biosynthesis; L-lysine biosynthesis via DAP pathway; LL-2,6-diaminopimelate from (S)-tetrahydrodipicolinate (succinylase route): step 3/3. Catalyzes the hydrolysis of N-succinyl-L,L-diaminopimelic acid (SDAP), forming succinate and LL-2,6-diaminopimelate (DAP), an intermediate involved in the bacterial biosynthesis of lysine and meso-diaminopimelic acid, an essential component of bacterial cell walls. In Xanthomonas campestris pv. campestris (strain B100), this protein is Succinyl-diaminopimelate desuccinylase.